The following is a 161-amino-acid chain: MPSFDVVSEANMIEVKNAIEQSNKEISTRFDFKGSDARVEQKERELTLFADDDFKLGQVKDVLIGKLAKRNVDVRFLDYGKVEKIGGDKVKQIVTVKKGVTGDLAKKIVRLVKDSKIKVQASIQGDAVRVAGTKRDDLQSVIAMLRKDVTDTPLDFNNFRD.

This sequence belongs to the YajQ family.

In terms of biological role, nucleotide-binding protein. The protein is Nucleotide-binding protein Bcep1808_2648 of Burkholderia vietnamiensis (strain G4 / LMG 22486) (Burkholderia cepacia (strain R1808)).